The primary structure comprises 274 residues: 2-dehydro-3-deoxyphosphooctonate aldolase (274 aa).

Belongs to the KdsA family.

The protein resides in the cytoplasm. The catalysed reaction is D-arabinose 5-phosphate + phosphoenolpyruvate + H2O = 3-deoxy-alpha-D-manno-2-octulosonate-8-phosphate + phosphate. The protein operates within carbohydrate biosynthesis; 3-deoxy-D-manno-octulosonate biosynthesis; 3-deoxy-D-manno-octulosonate from D-ribulose 5-phosphate: step 2/3. It participates in bacterial outer membrane biogenesis; lipopolysaccharide biosynthesis. The sequence is that of 2-dehydro-3-deoxyphosphooctonate aldolase from Rickettsia rickettsii (strain Iowa).